A 347-amino-acid chain; its full sequence is Lipopolysaccharide core heptosyltransferase OpsX (347 aa).

Belongs to the glycosyltransferase 9 family.

The protein operates within bacterial outer membrane biogenesis; LPS core biosynthesis. Its function is as follows. Catalyzes heptose transfer to the lipopolysaccharide core. It transfers the first L-glycero-D-manno-heptose to the phosphorylated 3-deoxy-alpha-D-manno-octulosonic acid (Kdo-P) of the inner core. This is Lipopolysaccharide core heptosyltransferase OpsX from Haemophilus influenzae (strain ATCC 51907 / DSM 11121 / KW20 / Rd).